A 354-amino-acid chain; its full sequence is MRRACIIGASGVIGGELLRLLLGHNNVEVVCATSRRFAGEFIYRVHPNLRGFINLKFTQPSIDAVLKSESDVVFLALPHGESVKWVPKLVESGLLAIDLSADFRLKNPDDYVKWYHWPQPHPYPDLLKAAAYGLPELHRDEIKATKVIAVPGCMATASIVSLAPLVKGHLINNDFIVVDAKIASSGAGAEGTVLDYHWHRTHVVRPYQPVGHRHTAEIEQELSLLAGSQVNVAFTPHAVDMVRGIFVTGHARLSGSISEPDLWRAYRGMYGNERFIRIVKDKAGLAHYPSVKYVVGTNMVDVGFELDQRLNRVVVFSAIDNLIRGAAGQAIQSFNINQGFPEDEGLRFITPYPV.

NADP(+) is bound by residues 10–13 and 34–36; these read SGVI and SRR. C153 is a catalytic residue. Residue N321 coordinates NADP(+).

Belongs to the NAGSA dehydrogenase family. Type 1 subfamily. LysY sub-subfamily.

It localises to the cytoplasm. The catalysed reaction is [amino-group carrier protein]-C-terminal-N-(1-carboxy-5-oxopentan-1-yl)-L-glutamine + phosphate + NADP(+) = [amino-group carrier protein]-C-terminal-N-(1-carboxy-5-phosphooxy-5-oxopentan-1-yl)-L-glutamine + NADPH + H(+). The enzyme catalyses [amino-group carrier protein]-C-terminal-gamma-(L-glutamyl-5-semialdehyde)-L-glutamate + phosphate + NADP(+) = [amino-group carrier protein]-C-terminal-gamma-(5-phospho-L-glutamyl)-L-glutamate + NADPH + H(+). It participates in amino-acid biosynthesis; L-lysine biosynthesis via AAA pathway; L-lysine from L-alpha-aminoadipate (Thermus route): step 3/5. The protein operates within amino-acid biosynthesis; L-arginine biosynthesis. Its function is as follows. Involved in both the arginine and lysine biosynthetic pathways. The sequence is that of Putative [LysW]-L-2-aminoadipate/[LysW]-L-glutamate phosphate reductase from Caldivirga maquilingensis (strain ATCC 700844 / DSM 13496 / JCM 10307 / IC-167).